A 601-amino-acid polypeptide reads, in one-letter code: Elongation factor 4 (601 aa).

The tr-type G domain occupies 6–188 (EHIRNFSIIA…EIVRKIPAPE (183 aa)). Residues 18–23 (DHGKST) and 135–138 (NKID) contribute to the GTP site.

This sequence belongs to the TRAFAC class translation factor GTPase superfamily. Classic translation factor GTPase family. LepA subfamily.

The protein localises to the cell inner membrane. It catalyses the reaction GTP + H2O = GDP + phosphate + H(+). Required for accurate and efficient protein synthesis under certain stress conditions. May act as a fidelity factor of the translation reaction, by catalyzing a one-codon backward translocation of tRNAs on improperly translocated ribosomes. Back-translocation proceeds from a post-translocation (POST) complex to a pre-translocation (PRE) complex, thus giving elongation factor G a second chance to translocate the tRNAs correctly. Binds to ribosomes in a GTP-dependent manner. In Hydrogenovibrio crunogenus (strain DSM 25203 / XCL-2) (Thiomicrospira crunogena), this protein is Elongation factor 4.